Here is a 356-residue protein sequence, read N- to C-terminus: 5-formaminoimidazole-4-carboxamide-1-(beta)-D-ribofuranosyl 5'-monophosphate synthetase (356 aa).

5-amino-1-(5-phospho-beta-D-ribosyl)imidazole-4-carboxamide contacts are provided by His-27 and Ser-94. Residues 101-333 (TENFADMAVP…YADLMEENLS (233 aa)) enclose the ATP-grasp domain. ATP is bound by residues 145 to 196 (PHDI…TRYY) and Glu-226. Residue Asn-255 participates in 5-amino-1-(5-phospho-beta-D-ribosyl)imidazole-4-carboxamide binding. Mg(2+)-binding residues include Glu-293 and Glu-306.

This sequence belongs to the phosphohexose mutase family. Mg(2+) is required as a cofactor. Requires Mn(2+) as cofactor.

The enzyme catalyses 5-amino-1-(5-phospho-beta-D-ribosyl)imidazole-4-carboxamide + formate + ATP = 5-formamido-1-(5-phospho-D-ribosyl)imidazole-4-carboxamide + ADP + phosphate. It functions in the pathway purine metabolism; IMP biosynthesis via de novo pathway; 5-formamido-1-(5-phospho-D-ribosyl)imidazole-4-carboxamide from 5-amino-1-(5-phospho-D-ribosyl)imidazole-4-carboxamide (formate route): step 1/1. Functionally, catalyzes the ATP- and formate-dependent formylation of 5-aminoimidazole-4-carboxamide-1-beta-d-ribofuranosyl 5'-monophosphate (AICAR) to 5-formaminoimidazole-4-carboxamide-1-beta-d-ribofuranosyl 5'-monophosphate (FAICAR) in the absence of folates. The chain is 5-formaminoimidazole-4-carboxamide-1-(beta)-D-ribofuranosyl 5'-monophosphate synthetase from Methanosarcina barkeri (strain Fusaro / DSM 804).